The primary structure comprises 223 residues: Large ribosomal subunit protein uL4c (223 aa).

A disordered region spans residues 61–96; that stretch reads TKTRSEVEGGGKKPWKQKGTGNARAGSSNSPLWKGG.

This sequence belongs to the universal ribosomal protein uL4 family. In terms of assembly, part of the 50S ribosomal subunit.

The protein resides in the plastid. The protein localises to the chloroplast. Functionally, probably binds the 23S rRNA. This Guillardia theta (Cryptophyte) protein is Large ribosomal subunit protein uL4c (rpl4).